Consider the following 433-residue polypeptide: Histidinol dehydrogenase 2 (433 aa).

3 residues coordinate NAD(+): Tyr130, Gln192, and Asn215. Positions 238, 260, and 263 each coordinate substrate. Residues Gln260 and His263 each coordinate Zn(2+). Residues Glu328 and His329 each act as proton acceptor in the active site. 4 residues coordinate substrate: His329, Asp362, Glu416, and His421. Zn(2+) is bound at residue Asp362. His421 contributes to the Zn(2+) binding site.

This sequence belongs to the histidinol dehydrogenase family. Zn(2+) serves as cofactor.

The catalysed reaction is L-histidinol + 2 NAD(+) + H2O = L-histidine + 2 NADH + 3 H(+). It functions in the pathway amino-acid biosynthesis; L-histidine biosynthesis; L-histidine from 5-phospho-alpha-D-ribose 1-diphosphate: step 9/9. Its function is as follows. Catalyzes the sequential NAD-dependent oxidations of L-histidinol to L-histidinaldehyde and then to L-histidine. This chain is Histidinol dehydrogenase 2, found in Trichormus variabilis (strain ATCC 29413 / PCC 7937) (Anabaena variabilis).